The primary structure comprises 427 residues: Lupus La protein homolog B (427 aa).

An HTH La-type RNA-binding domain is found at 6 to 98 (DKEQLDLDTK…RRSPAKPLPE (93 aa)). The RRM domain maps to 110-202 (RSVYIKGFPT…EERKLNKSEE (93 aa)). Disordered regions lie at residues 193–220 (EERK…AEDA) and 319–427 (EGKQ…VGDQ). The xRRM domain occupies 226 to 348 (EERVGCLLKF…KGRGGKGNDS (123 aa)). A Nuclear localization signal motif is present at residues 315–331 (KKIMEGKQESFNKRKGR). Basic residues-rich tracts occupy residues 327–342 (KRKG…KGRG) and 351–360 (RKKIQFQGKK). Acidic residues predominate over residues 365 to 376 (SSDDEDDMEESE). Positions 405–427 (RALDDKAEDGPAVKQSKTEVGDQ) are enriched in basic and acidic residues.

In terms of processing, phosphorylated.

It is found in the nucleus. Its function is as follows. La protein plays a role in the transcription of RNA polymerase III. It is most probably a transcription termination factor. Binds to the 3' termini of virtually all nascent polymerase III transcripts. This is Lupus La protein homolog B (ssb-b) from Xenopus laevis (African clawed frog).